A 70-amino-acid polypeptide reads, in one-letter code: DNA-directed RNA polymerase subunit omega (70 aa).

It belongs to the RNA polymerase subunit omega family. As to quaternary structure, the RNAP catalytic core consists of 2 alpha, 1 beta, 1 beta' and 1 omega subunit. When a sigma factor is associated with the core the holoenzyme is formed, which can initiate transcription.

It catalyses the reaction RNA(n) + a ribonucleoside 5'-triphosphate = RNA(n+1) + diphosphate. Functionally, promotes RNA polymerase assembly. Latches the N- and C-terminal regions of the beta' subunit thereby facilitating its interaction with the beta and alpha subunits. This chain is DNA-directed RNA polymerase subunit omega, found in Bacillus anthracis.